We begin with the raw amino-acid sequence, 331 residues long: Biotin synthase (331 aa).

Residues Phe52–Arg281 form the Radical SAM core domain. Residues Cys70, Cys74, and Cys77 each coordinate [4Fe-4S] cluster. [2Fe-2S] cluster is bound by residues Cys114, Cys146, Cys206, and Arg276.

It belongs to the radical SAM superfamily. Biotin synthase family. As to quaternary structure, homodimer. The cofactor is [4Fe-4S] cluster. [2Fe-2S] cluster is required as a cofactor.

It carries out the reaction (4R,5S)-dethiobiotin + (sulfur carrier)-SH + 2 reduced [2Fe-2S]-[ferredoxin] + 2 S-adenosyl-L-methionine = (sulfur carrier)-H + biotin + 2 5'-deoxyadenosine + 2 L-methionine + 2 oxidized [2Fe-2S]-[ferredoxin]. It participates in cofactor biosynthesis; biotin biosynthesis; biotin from 7,8-diaminononanoate: step 2/2. Functionally, catalyzes the conversion of dethiobiotin (DTB) to biotin by the insertion of a sulfur atom into dethiobiotin via a radical-based mechanism. In Bacillus pumilus (strain SAFR-032), this protein is Biotin synthase.